Consider the following 463-residue polypeptide: tRNA (guanine(10)-N(2))-methyltransferase TRMT11 (463 aa).

Ala-2 carries the post-translational modification N-acetylalanine.

The protein belongs to the class I-like SAM-binding methyltransferase superfamily. TRM11 methyltransferase family. As to quaternary structure, part of the heterodimeric TRMT11-TRM112 methyltransferase complex; this complex forms an active tRNA methyltransferase, where TRMT112 acts as an activator of the catalytic subunit TRMT11.

The protein localises to the cytoplasm. It catalyses the reaction guanosine(10) in tRNA + S-adenosyl-L-methionine = N(2)-methylguanosine(10) in tRNA + S-adenosyl-L-homocysteine + H(+). Functionally, catalytic subunit of the TRMT11-TRM112 methyltransferase complex, that specifically mediates the S-adenosyl-L-methionine-dependent N(2)-methylation of guanosine nucleotide at position 10 (m2G10) in tRNAs. This is one of the major tRNA (guanine-N(2))-methyltransferases. This chain is tRNA (guanine(10)-N(2))-methyltransferase TRMT11, found in Pongo abelii (Sumatran orangutan).